A 435-amino-acid chain; its full sequence is Bystin (435 aa).

Residues 1–102 form a disordered region; sequence MPKFKAARGA…VPQDGSDDEE (102 aa). The residue at position 40 (R40) is an Omega-N-methylarginine. Basic and acidic residues predominate over residues 71–87; sequence AEHGSGDRPAVPRERTT. Residue S98 is modified to Phosphoserine. Phosphothreonine is present on T154. Phosphoserine occurs at positions 165 and 412.

The protein belongs to the bystin family. As to quaternary structure, binds trophinin, tastin and cytokeratins.

The protein localises to the cytoplasm. The protein resides in the nucleus. It is found in the nucleolus. Functionally, required for processing of 20S pre-rRNA precursor and biogenesis of 40S ribosomal subunits. The protein is Bystin (BYSL) of Bos taurus (Bovine).